Consider the following 300-residue polypeptide: Ribosomal RNA small subunit methyltransferase H (300 aa).

Residues 35–37 (GGH), aspartate 55, phenylalanine 82, aspartate 100, and glutamine 107 each bind S-adenosyl-L-methionine.

Belongs to the methyltransferase superfamily. RsmH family.

The protein localises to the cytoplasm. It catalyses the reaction cytidine(1402) in 16S rRNA + S-adenosyl-L-methionine = N(4)-methylcytidine(1402) in 16S rRNA + S-adenosyl-L-homocysteine + H(+). In terms of biological role, specifically methylates the N4 position of cytidine in position 1402 (C1402) of 16S rRNA. The polypeptide is Ribosomal RNA small subunit methyltransferase H (Chlamydia trachomatis serovar A (strain ATCC VR-571B / DSM 19440 / HAR-13)).